Consider the following 477-residue polypeptide: Endo-1,4-beta-xylanase A (477 aa).

The N-terminal stretch at 1 to 41 (MGSYALPRSGVRRSIRVLLLALVVGVLGTATALIAPPGAHA) is a signal peptide. One can recognise a GH10 domain in the interval 42–340 (AESTLGAAAA…KAAYTAVLDA (299 aa)). Residue Glu-169 is the Proton donor of the active site. Glu-277 functions as the Nucleophile in the catalytic mechanism. One can recognise a Ricin B-type lectin domain in the interval 361-477 (SGRCLDVPDA…NGSNQRWTRT (117 aa)). 3 disulfides stabilise this stretch: Cys-364–Cys-383, Cys-406–Cys-423, and Cys-447–Cys-466.

This sequence belongs to the glycosyl hydrolase 10 (cellulase F) family.

The protein localises to the secreted. The catalysed reaction is Endohydrolysis of (1-&gt;4)-beta-D-xylosidic linkages in xylans.. It participates in glycan degradation; xylan degradation. In terms of biological role, contributes to hydrolyze hemicellulose, the major component of plant cell-walls. XLNA and XLNB seem to act sequentially on the substrate to yield xylobiose and xylose as carbon sources. The sequence is that of Endo-1,4-beta-xylanase A (xlnA) from Streptomyces lividans.